The primary structure comprises 386 residues: Patatin-2-Kuras 2 (386 aa).

A signal peptide spans 1–23; that stretch reads MATTKSFLILFFMILATTSSTCA. Residues 32-229 form the PNPLA domain; the sequence is LSIDGGGIKG…TVGDPALLSL (198 aa). Residues 36–41 carry the GXGXXG motif; sequence GGGIKG. The short motif at 75–79 is the GXSXG element; it reads GTSTG. S77 (nucleophile) is an active-site residue. Residue N115 is glycosylated (N-linked (GlcNAc...) asparagine). D215 (proton acceptor) is an active-site residue. Residues 215–217 carry the DGA/G motif; sequence DGA. Positions 321–384 form a coiled coil; sequence ENALTGTTTE…DRKKLRANKA (64 aa).

This sequence belongs to the patatin family.

It localises to the vacuole. Probable lipolytic acyl hydrolase (LAH), an activity which is thought to be involved in the response of tubers to pathogens. The chain is Patatin-2-Kuras 2 (pat2-k2) from Solanum tuberosum (Potato).